The chain runs to 544 residues: Light-independent protochlorophyllide reductase subunit B (544 aa).

Residue Asp36 coordinates [4Fe-4S] cluster. Asp286 (proton donor) is an active-site residue. 421–422 (GM) is a substrate binding site.

The protein belongs to the ChlB/BchB/BchZ family. As to quaternary structure, protochlorophyllide reductase is composed of three subunits; BchL, BchN and BchB. Forms a heterotetramer of two BchB and two BchN subunits. [4Fe-4S] cluster is required as a cofactor.

The enzyme catalyses chlorophyllide a + oxidized 2[4Fe-4S]-[ferredoxin] + 2 ADP + 2 phosphate = protochlorophyllide a + reduced 2[4Fe-4S]-[ferredoxin] + 2 ATP + 2 H2O. Its pathway is porphyrin-containing compound metabolism; bacteriochlorophyll biosynthesis (light-independent). Functionally, component of the dark-operative protochlorophyllide reductase (DPOR) that uses Mg-ATP and reduced ferredoxin to reduce ring D of protochlorophyllide (Pchlide) to form chlorophyllide a (Chlide). This reaction is light-independent. The NB-protein (BchN-BchB) is the catalytic component of the complex. This chain is Light-independent protochlorophyllide reductase subunit B, found in Chloroflexus aggregans (strain MD-66 / DSM 9485).